The sequence spans 156 residues: Ribosome-binding factor A (156 aa).

Residues 125–138 (RVREGAKHAGDPDP) show a composition bias toward basic and acidic residues. The disordered stretch occupies residues 125–156 (RVREGAKHAGDPDPYRVGGAEDTDGDTDGDER). Acidic residues predominate over residues 145-156 (EDTDGDTDGDER).

Belongs to the RbfA family. In terms of assembly, monomer. Binds 30S ribosomal subunits, but not 50S ribosomal subunits or 70S ribosomes.

Its subcellular location is the cytoplasm. One of several proteins that assist in the late maturation steps of the functional core of the 30S ribosomal subunit. Associates with free 30S ribosomal subunits (but not with 30S subunits that are part of 70S ribosomes or polysomes). Required for efficient processing of 16S rRNA. May interact with the 5'-terminal helix region of 16S rRNA. The polypeptide is Ribosome-binding factor A (Mycolicibacterium smegmatis (strain ATCC 700084 / mc(2)155) (Mycobacterium smegmatis)).